Reading from the N-terminus, the 166-residue chain is uncharacterized protein (166 aa).

Residues 2–82 (DNWVCYLIMS…KRLSKKRNIQ (81 aa)) enclose the GIY-YIG domain. Residues 23 to 43 (NNRQRRLNDHNNLNPSRKGAK) form a disordered region.

This is an uncharacterized protein from Acanthamoeba polyphaga mimivirus (APMV).